Reading from the N-terminus, the 364-residue chain is Anthranilate N-methyltransferase (364 aa).

The tract at residues 1–20 (MGSLSESHTQYKHGVEVEED) is disordered. Residues glycine 209, aspartate 232, methionine 253, and lysine 266 each coordinate S-adenosyl-L-methionine. The active-site Proton acceptor is the histidine 270.

The protein belongs to the class I-like SAM-binding methyltransferase superfamily. Cation-independent O-methyltransferase family. COMT subfamily. Homodimer. Expressed in leaves, flowers, stems and roots. Detected in the vascular tissues in stems, in the rhizodermis or the endodermis of roots, in the inside of carpels, in the central vascular bundles of the syncarp ovary and in the secretory oil glands located around the outer ovary wall.

The catalysed reaction is anthranilate + S-adenosyl-L-methionine = N-methylanthranilate + S-adenosyl-L-homocysteine + H(+). Its activity is regulated as follows. Inhibited by Ca(2+), Co(2+), Fe(2+), Fe(3+), Cu(2+) or Zn(2+). No effect of Mg(2+). Its function is as follows. Involved in the biosynthesis of acridine alkaloids. N-methyltransferase with a strict substrate specificity for anthranilate. No activity with anthranilic acid methyl ester, anthraniloyl CoA, 3- or 4-amino-benzoic acid, salicylic acid, catechol, eugenol, caffeic acid, quercetin, theobromin, theophyllin, putrescine and nicotinic acid among others. This is Anthranilate N-methyltransferase from Ruta graveolens (Common rue).